Reading from the N-terminus, the 679-residue chain is UvrABC system protein C (679 aa).

Positions 65–143 (NSPGVYRMLN…IKRLRPRFNV (79 aa)) constitute a GIY-YIG domain. The UVR domain maps to 253 to 288 (QKVKSHMAEAMNQAAEDLDFERAAIYRDRLAALSHV).

Belongs to the UvrC family. As to quaternary structure, interacts with UvrB in an incision complex.

It localises to the cytoplasm. Its function is as follows. The UvrABC repair system catalyzes the recognition and processing of DNA lesions. UvrC both incises the 5' and 3' sides of the lesion. The N-terminal half is responsible for the 3' incision and the C-terminal half is responsible for the 5' incision. The protein is UvrABC system protein C of Rhizobium etli (strain ATCC 51251 / DSM 11541 / JCM 21823 / NBRC 15573 / CFN 42).